A 411-amino-acid polypeptide reads, in one-letter code: MSDSVILALGIAAFTVIVLVLVAIILFAKSKLVDSGDITIGINDDPEKAITLPAGSKLLGALASKGIFVSSACGGGGSCGQCIVKVKNGGGEILPTELSHINKREAKEGYRLACQVNVKGNMEVELPEEIFGVKKWECTVISNDNKATFIKELKLAIPEGEEVPFRAGGYIQIEAEPHVVNYKDFDIPEEYHEDWDKYDLWRYVSKVDEHIIRAYSMASYPEEKGIIMLNVRIATPPPRQPDAPPGQMSSYIWSLKAGDKVTISGPFGEFFAKETDAEMVFIGGGAGMAPMRSHIFDQLKRLHSKRKMSFWYGARSKREIFYQEDFDQLQAENPNFVWHVALSDALPEDNWTGYTGFIHNVLYENYLKNHEAPEDCEYYMCGPPVMNAAVIKMLKDLGVEDENILLDDFGG.

Residues Val-5–Ile-25 traverse the membrane as a helical segment. The region spanning Gly-36–Ile-130 is the 2Fe-2S ferredoxin-type domain. The [2Fe-2S] cluster site is built by Cys-73, Cys-79, Cys-82, and Cys-114. The region spanning Val-133–Lys-273 is the FAD-binding FR-type domain.

This sequence belongs to the NqrF family. In terms of assembly, composed of six subunits; NqrA, NqrB, NqrC, NqrD, NqrE and NqrF. [2Fe-2S] cluster serves as cofactor. The cofactor is FAD.

Its subcellular location is the cell inner membrane. It carries out the reaction a ubiquinone + n Na(+)(in) + NADH + H(+) = a ubiquinol + n Na(+)(out) + NAD(+). In terms of biological role, NQR complex catalyzes the reduction of ubiquinone-1 to ubiquinol by two successive reactions, coupled with the transport of Na(+) ions from the cytoplasm to the periplasm. The first step is catalyzed by NqrF, which accepts electrons from NADH and reduces ubiquinone-1 to ubisemiquinone by a one-electron transfer pathway. This chain is Na(+)-translocating NADH-quinone reductase subunit F, found in Haemophilus influenzae (strain PittEE).